Here is a 212-residue protein sequence, read N- to C-terminus: Cyclin-dependent kinase 2-interacting protein (212 aa).

The residue at position 1 (Met1) is an N-acetylmethionine. 2 positions are modified to phosphoserine: Ser69 and Ser73. Residues 73–107 (SKENEEKVCLEYNEELEKLCEELQATLDGLTKIQV) adopt a coiled-coil conformation. Ser202 is a Na(+) binding site.

It belongs to the CINP family. Homodimer. Part of the 55LCC heterohexameric ATPase complex composed at least of AIRIM, AFG2A, AFG2B and CINP. Interacts with AIRIM. Interacts with CDK2 and CDC7. Interacts with the components of the replication complex, MCM2, MCM3, MCM4, MCM5, MCM6, MCM7 and with ORC2-containing complexes. Interacts with ATRIP. Interacts with CEP152. Associates with pre-60S ribosomal particles. Post-translationally, phosphorylated by CDC7 but not by CDK2.

The protein resides in the nucleus. Component of the DNA replication complex, which interacts with two kinases, CDK2 and CDC7, thereby providing a functional and physical link between CDK2 and CDC7 during firing of the origins of replication. Regulates ATR-mediated checkpoint signaling in response to DNA damage. Part of the 55LCC heterohexameric ATPase complex which is chromatin-associated and promotes replisome proteostasis to maintain replication fork progression and genome stability. Required for replication fork progression, sister chromatid cohesion, and chromosome stability. The ATPase activity is specifically enhanced by replication fork DNA and is coupled to cysteine protease-dependent cleavage of replisome substrates in response to replication fork damage. Uses ATPase activity to process replisome substrates in S-phase, facilitating their proteolytic turnover from chromatin to ensure DNA replication and mitotic fidelity. As part of 55LCC complex, also involved in the cytoplasmic maturation steps of pre-60S ribosomal particles by promoting the release of shuttling protein RSL24D1/RLP24 from the pre-ribosomal particles. This is Cyclin-dependent kinase 2-interacting protein from Homo sapiens (Human).